A 917-amino-acid chain; its full sequence is DNA repair endonuclease XPF (917 aa).

The interval 1–457 (MEPGLSGERR…EVWVNVRKGD (457 aa)) is helicase-like. 2 leucine-zipper regions span residues 233-254 (LNACLKELKCHNPSLEVEDLSL) and 270-298 (LDPLWHQLGAKTKSLVQDLKILRTLLQYL). The residue at position 289 (Lys-289) is an N6-acetyllysine. Residues 454-479 (RKGDGPKRTTKSDKRPKAAPNKERAS) are compositionally biased toward basic and acidic residues. 2 disordered regions span residues 454–524 (RKGD…SSPE) and 643–681 (VPEEREGRDETNLDLARGSAALDAPTDTRKAGGQEQNGT). Residues 487-492 (KRKKQE) carry the Nuclear localization signal motif. Basic and acidic residues predominate over residues 507–516 (EDKALEEDLC). At Ser-522 the chain carries Phosphoserine. Basic and acidic residues predominate over residues 643 to 653 (VPEEREGRDET). The interval 659–814 (RGSAALDAPT…PSPHATAELF (156 aa)) is nuclease. Residues 684 to 764 (SIVVDMREFR…RPVLLIEFDP (81 aa)) enclose the ERCC4 domain. A Phosphoserine modification is found at Ser-765. Positions 838 to 906 (TLPESDRYNP…QLHDFLHTAY (69 aa)) are hhH2, dimerization with ERCC1. An N6-acetyllysine modification is found at Lys-912.

This sequence belongs to the XPF family. As to quaternary structure, heterodimer composed of ERCC1 and ERCC4/XPF. Interacts with SLX4/BTBD12; this interaction is direct and links the ERCC1-ERCC4/XPF complex to SLX4, which may coordinate the action of the structure-specific endonuclease during DNA repair. It depends on Mg(2+) as a cofactor. Acetylation at Lys-912 by KAT5 promotes interaction with ERCC1 by disrupting a salt bridge between Asp-908 and Lys-912, thereby exposing a second binding site for ERCC1. Deacetylated by SIRT1.

The protein resides in the nucleus. It localises to the chromosome. In terms of biological role, catalytic component of a structure-specific DNA repair endonuclease responsible for the 5-prime incision during DNA repair, and which is essential for nucleotide excision repair (NER) and interstrand cross-link (ICL) repair. The sequence is that of DNA repair endonuclease XPF from Mus musculus (Mouse).